Reading from the N-terminus, the 325-residue chain is GMP reductase (325 aa).

The active-site Thioimidate intermediate is Cys174. 203-226 is an NADP(+) binding site; the sequence is LIADGGIRTHGDIAKSIRFGATMV.

This sequence belongs to the IMPDH/GMPR family. GuaC type 2 subfamily.

It catalyses the reaction IMP + NH4(+) + NADP(+) = GMP + NADPH + 2 H(+). Functionally, catalyzes the irreversible NADPH-dependent deamination of GMP to IMP. It functions in the conversion of nucleobase, nucleoside and nucleotide derivatives of G to A nucleotides, and in maintaining the intracellular balance of A and G nucleotides. This is GMP reductase from Pediococcus pentosaceus (strain ATCC 25745 / CCUG 21536 / LMG 10740 / 183-1w).